The sequence spans 4981 residues: Protocadherin Fat 4 (4981 aa).

The N-terminal stretch at M1–A38 is a signal peptide. At W39–A4504 the chain is on the extracellular side. Cadherin domains are found at residues A43 to F135, P136 to F250, G251 to V353, P359 to F475, S476 to F582, Q584 to F689, Y690 to F793, S794 to F893, L894 to F996, D997 to F1100, N1101 to F1210, L1211 to F1315, P1316 to F1420, P1421 to F1529, F1529 to F1629, T1630 to F1740, P1741 to F1841, S1842 to F1944, S1945 to F2051, F2051 to F2154, A2155 to F2259, E2260 to F2364, A2365 to F2466, Q2467 to V2567, R2568 to F2669, K2670 to F2773, F2773 to F2872, S2873 to F2983, L2984 to F3089, S3090 to F3194, L3195 to F3298, V3299 to F3404, T3405 to L3510, and M3509 to F3620. Residues N84 and N237 are each glycosylated (N-linked (GlcNAc...) asparagine). N393, N416, N435, N483, N551, N615, N676, N721, N825, N880, N946, N1085, N1101, N1104, N1225, N1296, N1389, and N1514 each carry an N-linked (GlcNAc...) asparagine glycan. Residues N1828, N1899, N1967, and N2119 are each glycosylated (N-linked (GlcNAc...) asparagine). Residues N2387 and N2430 are each glycosylated (N-linked (GlcNAc...) asparagine). N2921, N2937, N3036, N3140, N3217, N3392, and N3477 each carry an N-linked (GlcNAc...) asparagine glycan. N3706 and N3758 each carry an N-linked (GlcNAc...) asparagine glycan. In terms of domain architecture, EGF-like 1 spans D3802–E3860. Cystine bridges form between C3806–C3817, C3811–C3848, C3850–C3859, C3866–C3877, C3871–C3886, C3888–C3897, C3904–C3915, C3909–C3924, C3926–C3935, C3942–C3953, C3947–C3962, and C3964–C3973. In terms of domain architecture, EGF-like 2; calcium-binding spans D3862–E3898. Residues D3900 to E3936 form the EGF-like 3; calcium-binding domain. The EGF-like 4 domain maps to S3938–E3974. The Laminin G-like 1 domain occupies L3975–C4159. N-linked (GlcNAc...) asparagine glycosylation occurs at N4017. Intrachain disulfides connect C4133/C4159, C4166/C4177, C4171/C4186, and C4188/C4197. One can recognise an EGF-like 5 domain in the interval L4162–E4198. A Laminin G-like 2 domain is found at Y4217 to C4398. N-linked (GlcNAc...) asparagine glycosylation is found at N4267 and N4312. 4 disulfide bridges follow: C4365–C4398, C4430–C4441, C4435–C4451, and C4453–C4462. An EGF-like 6 domain is found at P4426–E4463. Residues V4505–L4525 traverse the membrane as a helical segment. The Cytoplasmic portion of the chain corresponds to C4526–V4981. Disordered stretches follow at residues A4534–I4584, Q4680–Y4713, R4752–D4856, K4869–G4911, and A4957–V4981. Residues Q4680 to S4699 are compositionally biased toward polar residues. Positions F4706–L4795 are necessary and sufficient for interaction with MPDZ. The segment covering D4809–R4821 has biased composition (basic and acidic residues). S4876 carries the phosphoserine modification. The segment covering V4971–V4981 has biased composition (basic and acidic residues).

As to quaternary structure, heterophilic interaction with DCHS1; this interaction affects their respective protein levels. Interacts (via cytoplasmic domain) with MPDZ. Forms a complex with PALS1 and MPDZ. As to expression, widely expressed. Expressed in fetal brain, infant brain, brain tumor and colorectal cancer.

It is found in the membrane. Its function is as follows. Cadherins are calcium-dependent cell adhesion proteins. FAT4 plays a role in the maintenance of planar cell polarity as well as in inhibition of YAP1-mediated neuroprogenitor cell proliferation and differentiation. In Homo sapiens (Human), this protein is Protocadherin Fat 4 (FAT4).